A 758-amino-acid chain; its full sequence is MFSKYVLATLLALFAQSMCIQELSLPPEGSHSTAATRSKKAKTAISEDIMYNYLMQFDYLPKSDLETGALRTEDQLKEAIRSLQSFGNITVTGEIDSATARLIQKPRCGVGDRRSADSFSPDNLYHEIGSNVRVRRFALQGPKWSRTDLTWSMVNRSMPDASKVERMVQTALDVWANHSKLTFREVYSDQADIQILFARRAHGDGYKFDGPGQVLAHAFYPGEGRGGDAHFDADETWNFDGESDDSHGTNFLNVALHELGHSLGLAHSAIPDAVMFPWYQNNEVAGNLPDDDRYGIQQLYGTKEKTWGPYKPQTTTTTTTTTTMRAMIYRADKPAYWPWNNPSNNPNNDRNRARERQEEERRRQEKERRRQEEERRHQEEERRRQVEERQRQEEERWRQEQERQEEENRRRKIEHKSQWERNPSKERNRPRERQEMERRRQEQERQEQERQEQEDRRRERERDRQLEWERRNRNGAREPVTPTANTTPRPTNKPYPTVHRQHHHHNKPRKPKPDSCMTYYDAISIIRGELFIFRGPYLWRIGTSGLYNGYPTEIRRHWSALPENLTKVDAVYENKQRQIVFFIGREYYVFNSVMLAPGFPKPLASLGLPPTLTHIDASFVWGHNNRTYMTSGTLYWRIDDYTGQVELDYPRDMSIWSGVGYNIDAAFQYLDGKTYFFKNLGYWEFNDDRMKVAHARAKLSARRWMQCARSANEVDDEQRWTASLVSEGEETGRSGSRELRINHFILSILLLAIANWRS.

Positions 1-17 are cleaved as a signal peptide; the sequence is MFSKYVLATLLALFAQS. Histidine 257 provides a ligand contact to Zn(2+). Glutamate 258 is a catalytic residue. The Zn(2+) site is built by histidine 261 and histidine 267. A disordered region spans residues 335–514; that stretch reads AYWPWNNPSN…HNKPRKPKPD (180 aa). Over residues 338 to 348 the composition is skewed to low complexity; it reads PWNNPSNNPNN. Over residues 349 to 476 the composition is skewed to basic and acidic residues; sequence DRNRARERQE…EWERRNRNGA (128 aa). Over residues 479 to 494 the composition is skewed to low complexity; sequence PVTPTANTTPRPTNKP. Basic residues predominate over residues 499 to 510; the sequence is HRQHHHHNKPRK. Hemopexin repeat units lie at residues 513-561, 565-610, 612-659, and 660-707; these read PDSC…WSAL, LTKV…GLPP, LTHI…WSGV, and GYNI…WMQC. Cysteine 516 and cysteine 707 form a disulfide bridge. Residues 739–756 traverse the membrane as a helical segment; it reads LRINHFILSILLLAIANW. Residues 757-758 are Cytoplasmic-facing; that stretch reads RS.

This sequence belongs to the peptidase M10A family. Ca(2+) is required as a cofactor. It depends on Zn(2+) as a cofactor. Widely expressed during embryogenesis including in the mesoderm, developing gut, central and peripheral nervous systems and imaginal disks. In the embryonic nervous system, expressed in neurons and glia. In third instar larvae, strongly expressed in the morphogenetic furrow of eye imaginal disks and in the optic lobe region of the brain. Expressed in posterior follicle cells in all mature stage 14 follicles but not in earlier follicles and is also expressed in some anterior follicle cells that help form dorsal eggshell structures.

Its subcellular location is the cell membrane. Has metalloproteinase activity. Proteolytically cleaves the PGRP-LC receptor; involved in gut-fat body innate immunological communication (GFIC)-mediated activation of the imd/Relish signal transduction pathway. Required for larval tissue histolysis during metamorphosis and is involved in pupal head eversion and fusion of the wing imaginal tissue. Required for growth of the dorsal air sac primordium and development of the dorsal air sacs. Promotes embryonic motor axon fasciculation. Cleaves and activates frac to promote motor axon bundling during outgrowth. Promotes the reshaping of adult sensory neuron dendrites from a radial to lattice-like shape which occurs after eclosion by degrading the basement membrane on which the dendrites grow. Involved in inhibition of follicle stem cell proliferation by cleaving Dlp, inhibiting its interaction with wg and preventing Dlp-mediated spreading of wg to follicle stem cells to enhance their proliferation. Plays a role in wound healing. Involved in fat body dissociation which occurs during metamorphosis by degrading basement membrane components, leading to destruction of cell-basement membrane junctions. Required for posterior follicle cell degradation and ovulation. The polypeptide is Matrix metalloproteinase-2 (Drosophila melanogaster (Fruit fly)).